The sequence spans 416 residues: Serine hydroxymethyltransferase (416 aa).

(6S)-5,6,7,8-tetrahydrofolate-binding positions include leucine 121 and 125 to 127 (GHL). N6-(pyridoxal phosphate)lysine is present on lysine 229.

The protein belongs to the SHMT family. Homodimer. Pyridoxal 5'-phosphate is required as a cofactor.

It is found in the cytoplasm. It carries out the reaction (6R)-5,10-methylene-5,6,7,8-tetrahydrofolate + glycine + H2O = (6S)-5,6,7,8-tetrahydrofolate + L-serine. It participates in one-carbon metabolism; tetrahydrofolate interconversion. Its pathway is amino-acid biosynthesis; glycine biosynthesis; glycine from L-serine: step 1/1. Functionally, catalyzes the reversible interconversion of serine and glycine with tetrahydrofolate (THF) serving as the one-carbon carrier. This reaction serves as the major source of one-carbon groups required for the biosynthesis of purines, thymidylate, methionine, and other important biomolecules. Also exhibits THF-independent aldolase activity toward beta-hydroxyamino acids, producing glycine and aldehydes, via a retro-aldol mechanism. In Dechloromonas aromatica (strain RCB), this protein is Serine hydroxymethyltransferase.